Consider the following 358-residue polypeptide: UDP-N-acetylglucosamine--N-acetylmuramyl-(pentapeptide) pyrophosphoryl-undecaprenol N-acetylglucosamine transferase (358 aa).

UDP-N-acetyl-alpha-D-glucosamine contacts are provided by residues 11 to 13, N122, R161, S189, I243, 262 to 267, and Q288; these read TGG and ALTVCE.

This sequence belongs to the glycosyltransferase 28 family. MurG subfamily.

The protein localises to the cell inner membrane. The enzyme catalyses di-trans,octa-cis-undecaprenyl diphospho-N-acetyl-alpha-D-muramoyl-L-alanyl-D-glutamyl-meso-2,6-diaminopimeloyl-D-alanyl-D-alanine + UDP-N-acetyl-alpha-D-glucosamine = di-trans,octa-cis-undecaprenyl diphospho-[N-acetyl-alpha-D-glucosaminyl-(1-&gt;4)]-N-acetyl-alpha-D-muramoyl-L-alanyl-D-glutamyl-meso-2,6-diaminopimeloyl-D-alanyl-D-alanine + UDP + H(+). Its pathway is cell wall biogenesis; peptidoglycan biosynthesis. Cell wall formation. Catalyzes the transfer of a GlcNAc subunit on undecaprenyl-pyrophosphoryl-MurNAc-pentapeptide (lipid intermediate I) to form undecaprenyl-pyrophosphoryl-MurNAc-(pentapeptide)GlcNAc (lipid intermediate II). The chain is UDP-N-acetylglucosamine--N-acetylmuramyl-(pentapeptide) pyrophosphoryl-undecaprenol N-acetylglucosamine transferase from Coxiella burnetii (strain CbuK_Q154) (Coxiella burnetii (strain Q154)).